Consider the following 794-residue polypeptide: Putative neurotrophin receptor LTRK 1 (794 aa).

The first 33 residues, 1 to 33 (MRGPRRFRLWTRANVLTVISILTSILSGAGCSP), serve as a signal peptide directing secretion. Over 34–419 (LSQLPSDNPA…PTEDFGPQTQ (386 aa)) the chain is Extracellular. The disordered stretch occupies residues 36–102 (QLPSDNPAHV…DQVPGDASRN (67 aa)). 3 N-linked (GlcNAc...) asparagine glycosylation sites follow: N64, N102, and N128. LRR repeat units follow at residues 181 to 202 (CLKH…AFKT) and 205 to 226 (SLET…LLRT). The LRRCT domain maps to 237 to 280 (NALTCSCTNLWLRSVDVAADRSEMTCSTRDGVSKMKMTQFKCEP). Residues N288 and N374 are each glycosylated (N-linked (GlcNAc...) asparagine). Residues 420-440 (VILPVVGVVILLISAVFIIYL) form a helical membrane-spanning segment. Residues 441–794 (CQRAKHRSHA…GDPVYIDIIA (354 aa)) are Cytoplasmic-facing. A Protein kinase domain is found at 504 to 775 (ILLMRVIGEG…PQDRLTMKDI (272 aa)). Residues 510–518 (IGEGAFGRV) and K538 each bind ATP. The active-site Proton acceptor is the D647. 4 positions are modified to phosphotyrosine; by autocatalysis: Y673, Y677, Y678, and Y789.

The protein belongs to the protein kinase superfamily. Tyr protein kinase family. Insulin receptor subfamily. As to expression, expression is confined to the central nervous system and its associated endocrine tissues.

It is found in the membrane. The catalysed reaction is L-tyrosyl-[protein] + ATP = O-phospho-L-tyrosyl-[protein] + ADP + H(+). Functionally, may bind an endogenous invertebrate neurotrophin. Binds human NT-3, but not NGF or BDNF. In Lymnaea stagnalis (Great pond snail), this protein is Putative neurotrophin receptor LTRK 1.